The sequence spans 234 residues: Sugar fermentation stimulation protein A (234 aa).

Residues 201 to 220 constitute a DNA-binding region (H-T-H motif); that stretch reads LLSEAQQRGVEILAYKAEIS.

The protein belongs to the SfsA family.

Functionally, binds to DNA non-specifically. Could be a regulatory factor involved in maltose metabolism. In Escherichia coli (strain 55989 / EAEC), this protein is Sugar fermentation stimulation protein A.